A 60-amino-acid chain; its full sequence is Potassium channel toxin alpha-KTx 3.6 (60 aa).

A signal peptide spans Met1–Gly22. Disulfide bonds link Cys29–Cys49, Cys35–Cys54, and Cys39–Cys56. A Lysine amide modification is found at Lys59.

It belongs to the short scorpion toxin superfamily. Potassium channel inhibitor family. Alpha-KTx 03 subfamily. Expressed by the venom gland.

The protein localises to the secreted. Its function is as follows. Blocks voltage-gated potassium channels. At 2 uM, blocks rat Kv1.1/KCNA1 and Kv1.3/KCNA3, has a strong effect on rat Kv1.2/KCNA2 and Kv1.6/KCNA6 as well as a moderate effect on Shaker IR. The polypeptide is Potassium channel toxin alpha-KTx 3.6 (Olivierus martensii (Manchurian scorpion)).